Consider the following 120-residue polypeptide: Ribonuclease P protein component 2 (120 aa).

It belongs to the eukaryotic/archaeal RNase P protein component 2 family. In terms of assembly, consists of a catalytic RNA component and at least 4-5 protein subunits.

Its subcellular location is the cytoplasm. The catalysed reaction is Endonucleolytic cleavage of RNA, removing 5'-extranucleotides from tRNA precursor.. Its function is as follows. Part of ribonuclease P, a protein complex that generates mature tRNA molecules by cleaving their 5'-ends. The polypeptide is Ribonuclease P protein component 2 (Methanobrevibacter smithii (strain ATCC 35061 / DSM 861 / OCM 144 / PS)).